Here is a 429-residue protein sequence, read N- to C-terminus: 3-phosphoshikimate 1-carboxyvinyltransferase (429 aa).

3-phosphoshikimate is bound by residues K11, S12, and R16. Position 11 (K11) interacts with phosphoenolpyruvate. Residues G82 and R110 each contribute to the phosphoenolpyruvate site. Residues S155, Q157, D302, and K329 each contribute to the 3-phosphoshikimate site. A phosphoenolpyruvate-binding site is contributed by Q157. The Proton acceptor role is filled by D302. 2 residues coordinate phosphoenolpyruvate: R333 and R385.

Belongs to the EPSP synthase family. As to quaternary structure, monomer.

The protein localises to the cytoplasm. It catalyses the reaction 3-phosphoshikimate + phosphoenolpyruvate = 5-O-(1-carboxyvinyl)-3-phosphoshikimate + phosphate. It functions in the pathway metabolic intermediate biosynthesis; chorismate biosynthesis; chorismate from D-erythrose 4-phosphate and phosphoenolpyruvate: step 6/7. Its function is as follows. Catalyzes the transfer of the enolpyruvyl moiety of phosphoenolpyruvate (PEP) to the 5-hydroxyl of shikimate-3-phosphate (S3P) to produce enolpyruvyl shikimate-3-phosphate and inorganic phosphate. This is 3-phosphoshikimate 1-carboxyvinyltransferase from Helicobacter pylori (strain ATCC 700392 / 26695) (Campylobacter pylori).